Here is a 1687-residue protein sequence, read N- to C-terminus: MGQNNSTPLSLTLDHWKDVRTRAHNLSVKIRKGKWQTFCSSEWPTFGVGWPPEGTFNLSVIFAVKRIVFQETGGHPDQVPYIVVWQDLAQSPPPWVPPSAKIAVVSSPENTRGPSAGRPSAPPRPPIYPATDDLLLLSEPPPYPAALPPPLAPPAVGPAPGQAPDSSDPEGPAAGTRSRRARSPADDSGPDSTVILPLRAIGPPAEPNGLVPLQYWPFSSADLYNWKSNHPSFSENPAGLTGLLESLMFSHQPTWDDCQQLLQILFTTEERERILLEARKNVLGDNGAPTQLENLINEAFPLNRPQWDYNTAAGRERLLVYRRTLVAGLKGAARRPTNLAKVREVLQGPAEPPSVFLERLMEAYRRYTPFDPSEEGQQAAVAMAFIGQSAPDIKKKLQRLEGLQDYSLQDLVREAEKVYHKRETEEERQEREKKEAEERERRRDRRQEKNLTRILAAVVSERGSRDRQTGNLSNRARKTPRDGRPPLDKDQCAYCKEKGHWARECPQKKNVREAKVLALDDQGSRGSDPLPEPRVTLTVEGTPIEFLVDTGAEHSVLTQPMGKVGSRRTVVEGATGSKVYPWTTKRLLKIGHKQVTHSFLVIPECPAPLLGRDLLTKLKAQIQFSAEGPQVTWEDRPTMCLVLNLEEEYRLHEKPVPSSIDPSWLQLFPTVWAERAGMGLANQVPPVVVELRSGASPVAVRQYPMSKEAREGIRPHIQRFLDLGVLVPCQSPWNTPLLPVKKPGTNDYRPVQDLREINKRVQDIHPTVPNPYNLLSSLPPSHTWYSVLDLKDAFFCLKLHPNSQPLFAFEWRDPEKGNTGQLTWTRLPQGFKNSPTLFDEALHRDLAPFRALNPQVVLLQYVDDLLVAAPTYRDCKEGTQKLLQELSKLGYRVSAKKAQLCQKEVTYLGYLLKEGKRWLTPARKATVMKIPPPTTPRQVREFLGTAGFCRLWIPGFASLAAPLYPLTKESIPFIWTEEHQKAFDRIKEALLSAPALALPDLTKPFTLYVDERAGVARGVLTQTLGPWRRPVAYLSKKLDPVASGWPTCLKAVAAVALLLKDADKLTLGQNVTVIASHSLESIVRQPPDRWMTNARMTHYQSLLLNERVSFAPPAVLNPATLLPVESEATPVHRCSEILAEETGTRRDLKDQPLPGVPAWYTDGSSFIAEGKRRAGAAIVDGKRTVWASSLPEGTSAQKAELVALTQALRLAEGKDINIYTDSRYAFATAHIHGAIYKQRGLLTSAGKDIKNKEEILALLEAIHLPKRVAIIHCPGHQKGNDPVATGNRRADEAAKQAALSTRVLAETTKPQELIXPAQVKTRPGELTPDRGKEFIQRLHQLTHLGPEKLLQLVNRTSLLIPNLQSAVREVTSQCQACAMTNAVTTYRETGKRQRGDRPGVYWEVDFTEVKPGRYGNRYLLVFIDTFSGWVEAFPTKTETALTVCKKILEEILPRFGIPKVLGSDNGPAFVAQVSQGLATQLGINWKLHCAYRPQSSGQVERMNRTIKETLTKLALETGXKDWVALLPLALLRARNTPGRFGLTPYEILYGGPPPILESGGTLGPDDNFLPVLFTHLKALEVVRTQIWDQIKEVYKPGTVAIPHPFQVGDQVLVRRHRPGSLEPRWKGPYLVLLTTPTAVKVDGIAAWVHASHLKPAPPSAPDESWELEKADHPLKLRIRRRRNESAK.

A lipid anchor (N-myristoyl glycine; by host) is attached at Gly-2. Disordered regions lie at residues 106-197 (SSPE…VILP) and 420-490 (HKRE…LDKD). The PTAP/PSAP motif signature appears at 108–111 (PENT). The span at 139–157 (EPPPYPAALPPPLAPPAVG) shows a compositional bias: pro residues. Positions 140-143 (PPPY) match the PPXY motif motif. Residues 408 to 455 (LQDLVREAEKVYHKRETEEERQEREKKEAEERERRRDRRQEKNLTRIL) adopt a coiled-coil conformation. 2 stretches are compositionally biased toward basic and acidic residues: residues 420 to 451 (HKRETEEERQEREKKEAEERERRRDRRQEKNL) and 479 to 490 (TPRDGRPPLDKD). The segment at 490-507 (DQCAYCKEKGHWARECPQ) adopts a CCHC-type zinc-finger fold. The Peptidase A2 domain maps to 544 to 614 (IEFLVDTGAE…CPAPLLGRDL (71 aa)). Residue Asp-549 is the Protease; shared with dimeric partner of the active site. Residues 721–912 (LDLGVLVPCQ…KEVTYLGYLL (192 aa)) form the Reverse transcriptase domain. Residues Asp-789, Asp-863, Asp-864, Asp-1180, Glu-1200, Asp-1221, and Asp-1291 each contribute to the Mg(2+) site. The RNase H type-1 domain occupies 1153–1299 (LPGVPAWYTD…ADEAAKQAAL (147 aa)). Residues 1339–1377 (HQLTHLGPEKLLQLVNRTSLLIPNLQSAVREVTSQCQAC) form an HHCC-type zinc finger. An Integrase catalytic domain is found at 1394 to 1552 (RGDRPGVYWE…TPYEILYGGP (159 aa)). Residues Asp-1405 and Asp-1464 each coordinate Mg(2+).

This sequence belongs to the retroviral Pol polyprotein family. In terms of assembly, homohexamer; further associates as homomultimer. The virus core is composed of a lattice formed from hexagonal rings, each containing six capsid monomers. As to quaternary structure, interacts (via PPXY motif) with host NEDD4. Interacts (via PSAP motif) with host TSG101. The reverse transcriptase is a monomer (Potential). Interacts (via RNase domains) with host release factor ETF1; this interaction is essential for translational readthrough of amber codon between viral gag and pol genes, as well as for viral replication. In terms of assembly, homodimer. It depends on Mg(2+) as a cofactor. Specific enzymatic cleavages by the viral protease yield mature proteins. The protease is released by autocatalytic cleavage. The polyprotein is cleaved during and after budding, this process is termed maturation. In terms of processing, phosphorylated on serine residues.

The protein localises to the virion. It is found in the host cell membrane. It localises to the host late endosome membrane. Its subcellular location is the host endosome. The protein resides in the host multivesicular body. The protein localises to the host cytoplasm. The enzyme catalyses DNA(n) + a 2'-deoxyribonucleoside 5'-triphosphate = DNA(n+1) + diphosphate. It carries out the reaction Endonucleolytic cleavage to 5'-phosphomonoester.. With respect to regulation, most efficiently inhibited by Amprenavir, which is able to block Gag-Pol processing in infected cells. In terms of biological role, plays a role in budding and is processed by the viral protease during virion maturation outside the cell. During budding, it recruits, in a PPXY-dependent or independent manner, Nedd4-like ubiquitin ligases that conjugate ubiquitin molecules to Gag-Pol, or to Gag-Pol binding host factors. Interaction with HECT ubiquitin ligases probably links the viral protein to the host ESCRT pathway and facilitates release. Its function is as follows. Targets Gag and gag-pol polyproteins to the plasma membrane via a multipartite membrane binding signal, that includes its myristoylated N-terminus. Also mediates nuclear localization of the pre-integration complex. Functionally, constituent of the pre-integration complex (PIC) which tethers the latter to mitotic chromosomes. This allows the integration of the viral genome into the host DNA. Forms the spherical core of the virion that encapsulates the genomic RNA-nucleocapsid complex. In terms of biological role, involved in the packaging and encapsidation of two copies of the genome. Binds with high affinity to conserved UCUG elements within the packaging signal, located near the 5'-end of the genome. This binding is dependent on genome dimerization. Acts as a nucleic acid chaperone which is involved in rearrangement of nucleic acid secondary structures during gRNA retrotranscription. Its function is as follows. The aspartyl protease mediates proteolytic cleavages of Gag and Gag-Pol polyproteins during or shortly after the release of the virion from the plasma membrane. Cleavages take place as an ordered, step-wise cascade to yield mature proteins. This process is called maturation. Displays maximal activity during the budding process just prior to particle release from the cell. Functionally, RT is a multifunctional enzyme that converts the viral dimeric RNA genome into dsDNA in the cytoplasm, shortly after virus entry into the cell. This enzyme displays a DNA polymerase activity that can copy either DNA or RNA templates, and a ribonuclease H (RNase H) activity that cleaves the RNA strand of RNA-DNA heteroduplexes in a partially processive 3' to 5' endonucleasic mode. Conversion of viral genomic RNA into dsDNA requires many steps. A tRNA binds to the primer-binding site (PBS) situated at the 5' end of the viral RNA. RT uses the 3' end of the tRNA primer to perform a short round of RNA-dependent minus-strand DNA synthesis. The reading proceeds through the U5 region and ends after the repeated (R) region which is present at both ends of viral RNA. The portion of the RNA-DNA heteroduplex is digested by the RNase H, resulting in a ssDNA product attached to the tRNA primer. This ssDNA/tRNA hybridizes with the identical R region situated at the 3' end of viral RNA. This template exchange, known as minus-strand DNA strong stop transfer, can be either intra- or intermolecular. RT uses the 3' end of this newly synthesized short ssDNA to perform the RNA-dependent minus-strand DNA synthesis of the whole template. RNase H digests the RNA template except for a polypurine tract (PPT) situated at the 5' end of the genome. It is not clear if both polymerase and RNase H activities are simultaneous. RNase H probably can proceed both in a polymerase-dependent (RNA cut into small fragments by the same RT performing DNA synthesis) and a polymerase-independent mode (cleavage of remaining RNA fragments by free RTs). Secondly, RT performs DNA-directed plus-strand DNA synthesis using the PPT that has not been removed by RNase H as primers. PPT and tRNA primers are then removed by RNase H. The 3' and 5' ssDNA PBS regions hybridize to form a circular dsDNA intermediate. Strand displacement synthesis by RT to the PBS and PPT ends produces a blunt ended, linear dsDNA copy of the viral genome that includes long terminal repeats (LTRs) at both ends. Catalyzes viral DNA integration into the host chromosome, by performing a series of DNA cutting and joining reactions. This enzyme activity takes place after virion entry into a cell and reverse transcription of the RNA genome in dsDNA. The first step in the integration process is 3' processing. This step requires a complex comprising the viral genome, matrix protein and integrase. This complex is called the pre-integration complex (PIC). The integrase protein removes 2 nucleotides from each 3' end of the viral DNA, leaving recessed CA OH's at the 3' ends. In the second step that requires cell division, the PIC enters cell nucleus. In the third step, termed strand transfer, the integrase protein joins the previously processed 3' ends to the 5' ends of strands of target cellular DNA at the site of integration. The last step is viral DNA integration into host chromosome. The polypeptide is Gag-Pol polyprotein (pol) (Woolly monkey sarcoma virus (WMSV)).